A 59-amino-acid chain; its full sequence is ATP synthase protein 8 (59 aa).

A helical transmembrane segment spans residues 7–23 (LSPPFLYFELIGHFQVE).

It belongs to the ATPase protein 8 family. As to quaternary structure, F-type ATPases have 2 components, CF(1) - the catalytic core - and CF(0) - the membrane proton channel.

Its subcellular location is the mitochondrion membrane. In terms of biological role, mitochondrial membrane ATP synthase (F(1)F(0) ATP synthase or Complex V) produces ATP from ADP in the presence of a proton gradient across the membrane which is generated by electron transport complexes of the respiratory chain. F-type ATPases consist of two structural domains, F(1) - containing the extramembraneous catalytic core and F(0) - containing the membrane proton channel, linked together by a central stalk and a peripheral stalk. During catalysis, ATP synthesis in the catalytic domain of F(1) is coupled via a rotary mechanism of the central stalk subunits to proton translocation. Part of the complex F(0) domain. Minor subunit located with subunit a in the membrane. The chain is ATP synthase protein 8 (MT-ATP8) from Oenothera berteroana (Bertero's evening primrose).